Reading from the N-terminus, the 71-residue chain is KREHEKEVLQKAIEENNNFSKMAEEKLTTKMEAIKENREAQMAAKLERLREKDKKLEEIRKGKECKEPSED.

A coiled-coil region spans residues 1–67 (KREHEKEVLQ…EIRKGKECKE (67 aa)). Residues 1-71 (KREHEKEVLQ…GKECKEPSED (71 aa)) enclose the SLD domain.

The protein belongs to the stathmin family. Binds to two alpha/beta-tubulin heterodimers. In terms of processing, from unphosphorylated forms to highly phosphorylated ones in the mature egg, followed by progressive dephosphorylation from the mid-blastula to the tailbud stage. Ubiquitous. Mostly abundant in brain and oocytes.

The protein localises to the cytoplasm. It localises to the cytoskeleton. Its function is as follows. Involved in the regulation of the microtubule (MT) filament system by destabilizing microtubules. It prevents assembly and promotes disassembly of microtubules. The protein is Stathmin-1-B (stmn1-b) of Xenopus laevis (African clawed frog).